The following is a 793-amino-acid chain: Sucrose synthase (793 aa).

Positions 263–742 are GT-B glycosyltransferase; sequence MISRILIVSI…ALARVAERYT (480 aa).

This sequence belongs to the glycosyltransferase 1 family. Homotetramer.

The enzyme catalyses an NDP-alpha-D-glucose + D-fructose = a ribonucleoside 5'-diphosphate + sucrose + H(+). It carries out the reaction ADP-alpha-D-glucose + D-fructose = sucrose + ADP + H(+). In terms of biological role, catalyzes the reversible conversion of sucrose and a nucleotide disphosphate (NDP) into fructose and NDP-glucose; although the reaction is freely reversible in vitro, the physiological reaction seems to be sucrose cleavage. Unlike characterized plant enzymes prefers ADP as a cosubstrate, whereas plants prefer UDP. The KM for sucrose is 45-fold lower in the presence of ADP than UDP. Its preference for ADP over UDP suggests it may directly link sucrose and glycogen metabolism. In Acidithiobacillus caldus (strain ATCC 51756 / DSM 8584 / KU), this protein is Sucrose synthase.